The following is an 89-amino-acid chain: Small ribosomal subunit protein uS17 (89 aa).

This sequence belongs to the universal ribosomal protein uS17 family. Part of the 30S ribosomal subunit.

One of the primary rRNA binding proteins, it binds specifically to the 5'-end of 16S ribosomal RNA. This chain is Small ribosomal subunit protein uS17, found in Lactiplantibacillus plantarum (strain ATCC BAA-793 / NCIMB 8826 / WCFS1) (Lactobacillus plantarum).